Reading from the N-terminus, the 463-residue chain is Argininosuccinate lyase (463 aa).

The protein belongs to the lyase 1 family. Argininosuccinate lyase subfamily.

It localises to the cytoplasm. It catalyses the reaction 2-(N(omega)-L-arginino)succinate = fumarate + L-arginine. The protein operates within amino-acid biosynthesis; L-arginine biosynthesis; L-arginine from L-ornithine and carbamoyl phosphate: step 3/3. In Bradyrhizobium sp. (strain ORS 278), this protein is Argininosuccinate lyase.